A 418-amino-acid chain; its full sequence is MDKLVIEGPCQLEGSVQISGAKNAALPILMGCLLSETPVVLSNVPHLKDVTTTIQLLATMGVEVMFDEELNIEIDASNITTKEAPYELVKTMRASILTMGPLLARFGEAKVSLPGGCAIGSRPVNIHIEGMQKMGAEIKVEQGYIIATADRLVGADITMEPVTVTGTENLLMAAVLAEGRTTLRNAAKEPEVSDLAHFLNKMGAKITGIDTDTLVIEGVEKLTGVSYRVIPDRIEAGTYLAAAALTKSCVTVKDVVPEHLTAVLDKFTEAGALVTTTDNTITLDMRNRSLKPVNIVTDPYPAFPTDMQAQFVVMNCLAEGEANVEETIFENRFMHVSELVRMGADIHVEGNVAHTKGVDHLIGAPVMATDLRASASLILAGLVAKGETVVSRIYHIDRGYELIEEKFHKLGAHIYRAN.

Phosphoenolpyruvate is bound at residue 22–23; it reads KN. UDP-N-acetyl-alpha-D-glucosamine is bound at residue R93. The Proton donor role is filled by C117. A 2-(S-cysteinyl)pyruvic acid O-phosphothioketal modification is found at C117. UDP-N-acetyl-alpha-D-glucosamine is bound by residues D306 and I328.

Belongs to the EPSP synthase family. MurA subfamily.

The protein resides in the cytoplasm. The enzyme catalyses phosphoenolpyruvate + UDP-N-acetyl-alpha-D-glucosamine = UDP-N-acetyl-3-O-(1-carboxyvinyl)-alpha-D-glucosamine + phosphate. The protein operates within cell wall biogenesis; peptidoglycan biosynthesis. Its function is as follows. Cell wall formation. Adds enolpyruvyl to UDP-N-acetylglucosamine. The sequence is that of UDP-N-acetylglucosamine 1-carboxyvinyltransferase from Hydrogenovibrio crunogenus (strain DSM 25203 / XCL-2) (Thiomicrospira crunogena).